The sequence spans 793 residues: E3 UFM1-protein ligase 1 (793 aa).

Ala2 is subject to N-acetylalanine. The mediates interaction with DDRGK1 stretch occupies residues Ala2 to Pro200. Residues Ala2–Phe212 are required for E3 UFM1-protein ligase activity. The interval Asp121–Ser250 is involved in CDK5RAP3-binding. Positions Pro200 to Asp400 are mediates interaction with TRIP4. Residues Val410–Asp473 form a disordered region. Arg433 carries the omega-N-methylarginine modification. Ser458 and Ser462 each carry phosphoserine. The tract at residues Ile490 to Leu683 is mediates interaction with CDK5RAP3. Thr535 is modified (phosphothreonine). The disordered stretch occupies residues Asn742–Lys769. Residues Ser752 and Ser753 each carry the phosphoserine modification. The segment covering Lys758–Lys769 has biased composition (basic and acidic residues).

This sequence belongs to the UFL1 family. As to quaternary structure, catalytic component of the UFM1 ribosome E3 ligase (UREL) complex, composed of UFL1, DDRGK1 and CDK5RAP3. Interacts with E2-like enzyme UFC1. Interacts with RELA. Interacts with NBN; promoting recruitment to double-strand breaks following DNA damage. Interacts (when phosphorylated) with YWHAG/14-3-3-gamma; sequestering UFL1 and preventing its association with PDCD1/PD-1 substrate. Post-translationally, ubiquitinated, leading to its degradation by the proteasome. Interaction with CDK5RAP3 protects both proteins against ubiquitination and degradation via the proteasome. Phosphorylated at Ser-462 by ATM, enhancing protein ligase activity and promoting ATM activation in a positive feedback loop. Phosphorylation at Thr-535 by AMPK promotes its interaction with YWHAG/14-3-3-gamma, thereby preventing UFL1 association with PDCD1/PD-1 substrate. Ubiquitously expressed with expression detected in brain, skeletal muscle, lung, heart, gall bladder, liver, small intestine, pancreas, spleen and kidney (at protein level). At 8 weeks after birth, high expression in the Purkinje cell layer of the cerebellum.

The protein localises to the endoplasmic reticulum membrane. Its subcellular location is the cytoplasm. It localises to the cytosol. It is found in the nucleus. The protein resides in the chromosome. Its function is as follows. E3 protein ligase that mediates ufmylation, the covalent attachment of the ubiquitin-like modifier UFM1 to lysine residues on target proteins, and which plays a key role in various processes, such as ribosome recycling, response to DNA damage, interferon response or reticulophagy (also called ER-phagy). Catalyzes ufmylation of many protein, such as CD274/PD-L1, CDK5RAP3, CYB5R3, DDRGK1, EIF6, histone H4, MRE11, P4HB, PDCD1/PD-1, TRIP4, RPN1, RPS20/uS10, RPL10/uL16, RPL26/uL24, SYVN1/HRD1 and TP53/p53. As part of the UREL complex, plays a key role in ribosome recycling by catalyzing mono-ufmylation of RPL26/uL24 subunit of the 60S ribosome. Ufmylation of RPL26/uL24 occurs on free 60S ribosomes following ribosome dissociation: it weakens the junction between post-termination 60S subunits and SEC61 translocons, promoting release and recycling of the large ribosomal subunit from the endoplasmic reticulum membrane. Ufmylation of RPL26/uL24 and subsequent 60S ribosome recycling either take place after normal termination of translation or after ribosome stalling during cotranslational translocation at the endoplasmic reticulum. Involved in reticulophagy in response to endoplasmic reticulum stress by mediating ufmylation of proteins such as CYB5R3 and RPN1, thereby promoting lysosomal degradation of ufmylated proteins. Ufmylation in response to endoplasmic reticulum stress is essential for processes such as hematopoiesis, blood vessel morphogenesis or inflammatory response. Mediates ufmylation of DDRGK1 and CDK5RAP3; the role of these modifications is however unclear: as both DDRGK1 and CDK5RAP3 act as substrate adapters for ufmylation, it is uncertain whether ufmylation of these proteins is, a collateral effect or is required for ufmylation. Acts as a negative regulator of T-cell activation by mediating ufmylation and stabilization of PDCD1/PD-1. Also involved in the response to DNA damage: recruited to double-strand break sites following DNA damage and mediates monoufmylation of histone H4 and ufmylation of MRE11. Mediates ufmylation of TP53/p53, promoting its stability. Catalyzes ufmylation of TRIP4, thereby playing a role in nuclear receptor-mediated transcription. Required for hematopoietic stem cell function and hematopoiesis. This chain is E3 UFM1-protein ligase 1, found in Rattus norvegicus (Rat).